Reading from the N-terminus, the 190-residue chain is Protein GrpE (190 aa).

Disordered regions lie at residues M1–I22 and E170–S190. Residues A181–S190 are compositionally biased toward basic residues.

Belongs to the GrpE family. Homodimer.

It localises to the cytoplasm. Participates actively in the response to hyperosmotic and heat shock by preventing the aggregation of stress-denatured proteins, in association with DnaK and GrpE. It is the nucleotide exchange factor for DnaK and may function as a thermosensor. Unfolded proteins bind initially to DnaJ; upon interaction with the DnaJ-bound protein, DnaK hydrolyzes its bound ATP, resulting in the formation of a stable complex. GrpE releases ADP from DnaK; ATP binding to DnaK triggers the release of the substrate protein, thus completing the reaction cycle. Several rounds of ATP-dependent interactions between DnaJ, DnaK and GrpE are required for fully efficient folding. The chain is Protein GrpE from Leptospira biflexa serovar Patoc (strain Patoc 1 / Ames).